A 520-amino-acid polypeptide reads, in one-letter code: tRNA (guanine-N(7)-)-methyltransferase non-catalytic subunit TRM82 (520 aa).

The interval Pro-51–Thr-102 is disordered. WD repeat units follow at residues Gln-105–Gln-145, Gly-244–His-291, and Gly-296–Pro-338.

It belongs to the WD repeat TRM82 family. Forms a heterodimer with the catalytic subunit TRM8.

The protein localises to the nucleus. It participates in tRNA modification; N(7)-methylguanine-tRNA biosynthesis. Functionally, required for the formation of N(7)-methylguanine at position 46 (m7G46) in tRNA. In the complex, it is required to stabilize and induce conformational changes of the catalytic subunit. The protein is tRNA (guanine-N(7)-)-methyltransferase non-catalytic subunit TRM82 of Coccidioides immitis (strain RS) (Valley fever fungus).